The chain runs to 368 residues: D-alanine--D-alanine ligase (368 aa).

One can recognise an ATP-grasp domain in the interval 151–358 (KKLLAAEGLP…YGTLVSTLVD (208 aa)). 179–234 (KSRLHLPVFVKPARGGSSIGITRVAEWAALDDAIAHARLHDPKVIVESGIIGREVE) provides a ligand contact to ATP. D313, E325, and N327 together coordinate Mg(2+).

The protein belongs to the D-alanine--D-alanine ligase family. The cofactor is Mg(2+). Requires Mn(2+) as cofactor.

Its subcellular location is the cytoplasm. The catalysed reaction is 2 D-alanine + ATP = D-alanyl-D-alanine + ADP + phosphate + H(+). Its pathway is cell wall biogenesis; peptidoglycan biosynthesis. Its function is as follows. Cell wall formation. This Rhodococcus jostii (strain RHA1) protein is D-alanine--D-alanine ligase.